The sequence spans 638 residues: NADH-ubiquinone oxidoreductase chain 5 (638 aa).

15 helical membrane-spanning segments follow: residues Thr7–Phe27, Phe66–Val86, Phe112–Ile132, Leu169–Trp189, Ala203–Leu223, Phe242–Gly262, Thr275–Val295, Ala307–Ile327, Ile335–Gly354, Thr365–Asn385, Ser404–Tyr424, Leu445–Phe465, Ala487–Phe507, Gly520–Leu540, and Tyr618–Ser638.

Belongs to the complex I subunit 5 family.

The protein resides in the mitochondrion inner membrane. It catalyses the reaction a ubiquinone + NADH + 5 H(+)(in) = a ubiquinol + NAD(+) + 4 H(+)(out). Functionally, core subunit of the mitochondrial membrane respiratory chain NADH dehydrogenase (Complex I) that is believed to belong to the minimal assembly required for catalysis. Complex I functions in the transfer of electrons from NADH to the respiratory chain. The immediate electron acceptor for the enzyme is believed to be ubiquinone. The chain is NADH-ubiquinone oxidoreductase chain 5 (ND5) from Paracentrotus lividus (Common sea urchin).